Reading from the N-terminus, the 346-residue chain is N-acetyl-gamma-glutamyl-phosphate reductase (346 aa).

C149 is an active-site residue.

It belongs to the NAGSA dehydrogenase family. Type 1 subfamily.

The protein localises to the cytoplasm. The enzyme catalyses N-acetyl-L-glutamate 5-semialdehyde + phosphate + NADP(+) = N-acetyl-L-glutamyl 5-phosphate + NADPH + H(+). It functions in the pathway amino-acid biosynthesis; L-arginine biosynthesis; N(2)-acetyl-L-ornithine from L-glutamate: step 3/4. In terms of biological role, catalyzes the NADPH-dependent reduction of N-acetyl-5-glutamyl phosphate to yield N-acetyl-L-glutamate 5-semialdehyde. This chain is N-acetyl-gamma-glutamyl-phosphate reductase, found in Geobacter sulfurreducens (strain ATCC 51573 / DSM 12127 / PCA).